A 416-amino-acid chain; its full sequence is Probable glucan 1,3-beta-glucosidase A (416 aa).

A signal peptide spans 1–22 (MIFKFSQKALVALCLVVGLAEA). Glu-211 serves as the catalytic Proton donor. Intrachain disulfides connect Cys-291-Cys-415 and Cys-316-Cys-342. Glu-308 acts as the Nucleophile in catalysis.

This sequence belongs to the glycosyl hydrolase 5 (cellulase A) family. As to quaternary structure, monomer. The cofactor is Mn(2+).

The protein resides in the secreted. It catalyses the reaction Successive hydrolysis of beta-D-glucose units from the non-reducing ends of (1-&gt;3)-beta-D-glucans, releasing alpha-glucose.. Beta-glucanases participate in the metabolism of beta-glucan, the main structural component of the cell wall. It could also function biosynthetically as a transglycosylase. This chain is Probable glucan 1,3-beta-glucosidase A (exgA), found in Neosartorya fischeri (strain ATCC 1020 / DSM 3700 / CBS 544.65 / FGSC A1164 / JCM 1740 / NRRL 181 / WB 181) (Aspergillus fischerianus).